A 145-amino-acid polypeptide reads, in one-letter code: MRTTPMANASTIERKWLVVDAAGKTLGRLSTEVASLLRGKHKPTYTPHVDTGDHVIIINAEKIELTGKKLTDKIYYRHTMHPGGLKQRTALEMRTNYPEKMLELAIKGMLPKGPLGRQMFKKLNVYRGSEHPHQAQQPEVYELRG.

It belongs to the universal ribosomal protein uL13 family. In terms of assembly, part of the 50S ribosomal subunit.

Its function is as follows. This protein is one of the early assembly proteins of the 50S ribosomal subunit, although it is not seen to bind rRNA by itself. It is important during the early stages of 50S assembly. The polypeptide is Large ribosomal subunit protein uL13 (Bacillus pumilus (strain SAFR-032)).